The following is an 847-amino-acid chain: Leucine--tRNA ligase (847 aa).

The 'HIGH' region motif lies at 43 to 53 (PYPSGKLHMGH). Residues 607 to 611 (KMSKS) carry the 'KMSKS' region motif. Lys-610 contributes to the ATP binding site.

Belongs to the class-I aminoacyl-tRNA synthetase family.

The protein resides in the cytoplasm. The catalysed reaction is tRNA(Leu) + L-leucine + ATP = L-leucyl-tRNA(Leu) + AMP + diphosphate. This is Leucine--tRNA ligase from Buchnera aphidicola subsp. Cinara cedri (strain Cc).